We begin with the raw amino-acid sequence, 214 residues long: Octanoyltransferase (214 aa).

One can recognise a BPL/LPL catalytic domain in the interval 34-214; the sequence is GLQKELVWLL…KFNEIFSSFN (181 aa). Residues 73-80, 145-147, and 158-160 contribute to the substrate site; these read RGGKYTYH, AFG, and GVS. The Acyl-thioester intermediate role is filled by Cys-176.

The protein belongs to the LipB family.

The protein localises to the cytoplasm. The catalysed reaction is octanoyl-[ACP] + L-lysyl-[protein] = N(6)-octanoyl-L-lysyl-[protein] + holo-[ACP] + H(+). The protein operates within protein modification; protein lipoylation via endogenous pathway; protein N(6)-(lipoyl)lysine from octanoyl-[acyl-carrier-protein]: step 1/2. Its function is as follows. Catalyzes the transfer of endogenously produced octanoic acid from octanoyl-acyl-carrier-protein onto the lipoyl domains of lipoate-dependent enzymes. Lipoyl-ACP can also act as a substrate although octanoyl-ACP is likely to be the physiological substrate. In Ehrlichia canis (strain Jake), this protein is Octanoyltransferase.